A 548-amino-acid chain; its full sequence is MESQRNLILIGLLFVSFLLWQQWESDKAPKPAPTTVAQTEHFVPEAGQTGDIPQVSEQANANAARKLITVSSDVLKLTLDTQGGDIVSAELLAHKLEEGKDQSFVLLTSQPDRLYVAQSGLVGRDGPDSQAQGRPTYEAAQTSYQLADGQDQVVVPMTWTDSKGVVFTKEFVLKRGDYAIGVDYKIDNKSAEPVQVQFYGQLKQTVTTPKDQEGHAMVASAYRGGAFSSEESRYKKYTFDEMKDADLNKTTKGGWVAMLQHYFVSAWAPNADDTNSFYSRVIPGKDQAIIGYKAPLVDVAAGQQAEVTSKLWVGPKLQDQMAKVANHLDLTVDYGWLWFIAQPLHWLLTVFQGFVHNWGVAIIMLTLLVRGIMFPLTKAQYTSMAKMRMLQPKLAALKERFSDDRQKMSQGMMELYKKEKVNPLGGCLPILVQMPIFIALYWALMESVELRHAPFALWITDLSVKDPFFVLPILMGASMWYLQKMSPTTITDPMQQKVMQFMPIIFTFMFLWFPAGLTLYWLVSNVISITQQTIIYRQLEKKGLHTRT.

A run of 5 helical transmembrane segments spans residues 6-26, 349-369, 424-444, 455-475, and 503-523; these read NLIL…WESD, TVFQ…TLLV, LGGC…YWAL, FALW…PILM, and PIIF…YWLV.

It belongs to the OXA1/ALB3/YidC family. Type 1 subfamily. As to quaternary structure, interacts with the Sec translocase complex via SecD. Specifically interacts with transmembrane segments of nascent integral membrane proteins during membrane integration.

It localises to the cell inner membrane. Functionally, required for the insertion and/or proper folding and/or complex formation of integral membrane proteins into the membrane. Involved in integration of membrane proteins that insert both dependently and independently of the Sec translocase complex, as well as at least some lipoproteins. Aids folding of multispanning membrane proteins. This Aeromonas salmonicida (strain A449) protein is Membrane protein insertase YidC.